Consider the following 1832-residue polypeptide: Zinc finger SWIM domain-containing protein 8 (1832 aa).

A phosphoserine mark is found at S36, S48, and S53. The segment at R45 to R67 is disordered. Over residues T55–G65 the composition is skewed to gly residues. An SWIM-type zinc finger spans residues Y172 to I208. S437 and S564 each carry phosphoserine. Disordered stretches follow at residues P516–E722, N800–S821, and S1018–V1216. Over residues L563–L572 the composition is skewed to basic and acidic residues. Residues H1021–S1042 are compositionally biased toward polar residues. Positions S1121–S1132 are enriched in gly residues. Position 1141 is a phosphothreonine (T1141). Residues I1146–L1161 are compositionally biased toward polar residues. Phosphoserine occurs at positions 1155, 1158, and 1162. A compositionally biased stretch (low complexity) spans G1176–A1211. At S1270 the chain carries Phosphoserine. Polar residues predominate over residues S1435 to G1446. The interval S1435 to A1465 is disordered. A compositionally biased stretch (gly residues) spans A1455–A1465. The residue at position 1831 (S1831) is a Phosphoserine.

Belongs to the ZSWIM8 family. In terms of assembly, component of the SCF-like E3 ubiquitin-protein ligase complex which contains CUL3, RBX1, ELOB, ELOC and ZSWIM8. Interacts with DAB1.

The protein localises to the cytoplasm. It localises to the cytosol. Its pathway is protein modification; protein ubiquitination. Its function is as follows. Substrate recognition component of a SCF-like E3 ubiquitin-protein ligase complex that promotes target-directed microRNA degradation (TDMD), a process that mediates degradation of microRNAs (miRNAs). The SCF-like E3 ubiquitin-protein ligase complex acts by catalyzing ubiquitination and subsequent degradation of AGO proteins (AGO1, AGO2, AGO3 and/or AGO4), thereby exposing miRNAs for degradation. Specifically recognizes and binds AGO proteins when they are engaged with a TDMD target. May also acts as a regulator of axon guidance: specifically recognizes misfolded ROBO3 and promotes its ubiquitination and subsequent degradation. Plays an essential role for proper embryonic development of heart and lung. Controls protein quality of DAB1, a key signal molecule for brain development, thus protecting its signaling strength. Mechanistically, recognizes intrinsically disordered regions of DAB1 and eliminates misfolded DAB1 that cannot be properly phosphorylated. In Mus musculus (Mouse), this protein is Zinc finger SWIM domain-containing protein 8.